A 279-amino-acid chain; its full sequence is Urease accessory protein UreD (279 aa).

The protein belongs to the UreD family. UreD, UreF and UreG form a complex that acts as a GTP-hydrolysis-dependent molecular chaperone, activating the urease apoprotein by helping to assemble the nickel containing metallocenter of UreC. The UreE protein probably delivers the nickel.

Its subcellular location is the cytoplasm. Its function is as follows. Required for maturation of urease via the functional incorporation of the urease nickel metallocenter. The protein is Urease accessory protein UreD of Streptococcus salivarius (strain 57.I).